The sequence spans 211 residues: Large ribosomal subunit protein uL3 (211 aa).

This sequence belongs to the universal ribosomal protein uL3 family. As to quaternary structure, part of the 50S ribosomal subunit. Forms a cluster with proteins L14 and L19.

In terms of biological role, one of the primary rRNA binding proteins, it binds directly near the 3'-end of the 23S rRNA, where it nucleates assembly of the 50S subunit. In Geobacter sp. (strain M21), this protein is Large ribosomal subunit protein uL3.